The sequence spans 60 residues: Large ribosomal subunit protein bL32 (60 aa).

Residues 1–16 (MAVPRRKTSPSRRGMR) are compositionally biased toward basic residues. Residues 1–60 (MAVPRRKTSPSRRGMRRSADAIKKPTYAEDKDSGELRRPHHLDLKTGMYKGRQVLIKKES) are disordered. Residues 17–44 (RSADAIKKPTYAEDKDSGELRRPHHLDL) show a composition bias toward basic and acidic residues.

This sequence belongs to the bacterial ribosomal protein bL32 family.

The chain is Large ribosomal subunit protein bL32 from Rhodopseudomonas palustris (strain BisA53).